Here is a 176-residue protein sequence, read N- to C-terminus: Protein FAM89A (176 aa).

Residues Asp-140 to His-165 form a disordered region.

It belongs to the FAM89 family.

The chain is Protein FAM89A (Fam89a) from Rattus norvegicus (Rat).